The chain runs to 230 residues: Triosephosphate isomerase (230 aa).

Substrate is bound at residue 9–11 (NYK). His93 functions as the Electrophile in the catalytic mechanism. Residue Glu141 is the Proton acceptor of the active site. Substrate-binding positions include Ile146, Gly180, and 201-202 (AS).

Belongs to the triosephosphate isomerase family. Homotetramer; dimer of dimers.

Its subcellular location is the cytoplasm. The catalysed reaction is D-glyceraldehyde 3-phosphate = dihydroxyacetone phosphate. The protein operates within carbohydrate biosynthesis; gluconeogenesis. It functions in the pathway carbohydrate degradation; glycolysis; D-glyceraldehyde 3-phosphate from glycerone phosphate: step 1/1. Involved in the gluconeogenesis. Catalyzes stereospecifically the conversion of dihydroxyacetone phosphate (DHAP) to D-glyceraldehyde-3-phosphate (G3P). The polypeptide is Triosephosphate isomerase (Sulfolobus acidocaldarius (strain ATCC 33909 / DSM 639 / JCM 8929 / NBRC 15157 / NCIMB 11770)).